Consider the following 292-residue polypeptide: MPTLKDIRIRLKGVKSTQQVTKAMKMVAAAKLRRAQDRAIQARPYAGKLKEMLASLSTKVDTSVNPLLSPREEVNNVLVILVTSDRGLCGGFNANIIKMAQRLIHEEYAALHAKGGVTMICAGTKGTEFFRKRGYKLAAAYPGVFQNLSFDSAREIADKASKMYLSGEVDRVVLVYNEFKSVLAPNLRTEQLLPITPEGGDAKTASSEYLYEPSPAAIIDELVPKHLNTQLWRVMLESNAAEQAARMAAMDSATENAKELIRVLNISYNRARQAAITKELSEIVAGADALKQ.

This sequence belongs to the ATPase gamma chain family. As to quaternary structure, F-type ATPases have 2 components, CF(1) - the catalytic core - and CF(0) - the membrane proton channel. CF(1) has five subunits: alpha(3), beta(3), gamma(1), delta(1), epsilon(1). CF(0) has three main subunits: a, b and c.

Its subcellular location is the cell inner membrane. In terms of biological role, produces ATP from ADP in the presence of a proton gradient across the membrane. The gamma chain is believed to be important in regulating ATPase activity and the flow of protons through the CF(0) complex. In Chlorobaculum tepidum (strain ATCC 49652 / DSM 12025 / NBRC 103806 / TLS) (Chlorobium tepidum), this protein is ATP synthase gamma chain.